The primary structure comprises 379 residues: Putative glutamate--cysteine ligase 2 (379 aa).

This sequence belongs to the glutamate--cysteine ligase type 2 family. YbdK subfamily.

It carries out the reaction L-cysteine + L-glutamate + ATP = gamma-L-glutamyl-L-cysteine + ADP + phosphate + H(+). Its function is as follows. ATP-dependent carboxylate-amine ligase which exhibits weak glutamate--cysteine ligase activity. This Roseiflexus castenholzii (strain DSM 13941 / HLO8) protein is Putative glutamate--cysteine ligase 2.